Reading from the N-terminus, the 446-residue chain is 3-phosphoshikimate 1-carboxyvinyltransferase (446 aa).

Positions 1–20 (MSTWPAPSTATPVHATVTVP) are disordered. Positions 23, 24, and 28 each coordinate 3-phosphoshikimate. Lys23 is a binding site for phosphoenolpyruvate. Positions 100 and 128 each coordinate phosphoenolpyruvate. 3-phosphoshikimate contacts are provided by Ser171, Ser172, Gln173, Ser200, Glu315, and His344. Gln173 contacts phosphoenolpyruvate. The active-site Proton acceptor is Glu315. Phosphoenolpyruvate is bound by residues Arg348, Arg389, and Lys414.

Belongs to the EPSP synthase family. In terms of assembly, monomer.

It localises to the cytoplasm. The catalysed reaction is 3-phosphoshikimate + phosphoenolpyruvate = 5-O-(1-carboxyvinyl)-3-phosphoshikimate + phosphate. It functions in the pathway metabolic intermediate biosynthesis; chorismate biosynthesis; chorismate from D-erythrose 4-phosphate and phosphoenolpyruvate: step 6/7. Its function is as follows. Catalyzes the transfer of the enolpyruvyl moiety of phosphoenolpyruvate (PEP) to the 5-hydroxyl of shikimate-3-phosphate (S3P) to produce enolpyruvyl shikimate-3-phosphate and inorganic phosphate. This is 3-phosphoshikimate 1-carboxyvinyltransferase from Mycolicibacterium vanbaalenii (strain DSM 7251 / JCM 13017 / BCRC 16820 / KCTC 9966 / NRRL B-24157 / PYR-1) (Mycobacterium vanbaalenii).